The following is a 126-amino-acid chain: Fluoride-specific ion channel FluC (126 aa).

The next 4 helical transmembrane spans lie at 4 to 24 (FMLLGFIAFGGAFGACARYLI), 35 to 55 (GFPYGTLTVNIVGSLIMGVLM), 71 to 91 (IIGLGFLGALTTFSTFSMDNV), and 104 to 124 (LNILLNVTLSITACFIGFQLM). 2 residues coordinate Na(+): glycine 78 and threonine 81.

The protein belongs to the fluoride channel Fluc/FEX (TC 1.A.43) family.

The protein localises to the cell inner membrane. It carries out the reaction fluoride(in) = fluoride(out). Its activity is regulated as follows. Na(+) is not transported, but it plays an essential structural role and its presence is essential for fluoride channel function. Its function is as follows. Fluoride-specific ion channel. Important for reducing fluoride concentration in the cell, thus reducing its toxicity. The chain is Fluoride-specific ion channel FluC from Aliivibrio salmonicida (strain LFI1238) (Vibrio salmonicida (strain LFI1238)).